Here is a 530-residue protein sequence, read N- to C-terminus: MLDANLKTQLTAYLERVTRPIQINASIDDSAGSREMLDLLEELVLLSDKISLDIHRDDNQRKPSFALTTPGQDISLRFAGLPMGHEFTSLVLALLQVGGHPSKAAAELIEQVQHLEGDYQFETYFSLSCQNCPDVVQALNLAAVLNPRIKHVAIDGAWFQDEVQARQIMSVPTVYLNGELFDQGRMTLEQIVAKLDTNAAKRDAAKIAAKEAFDVLVVGGGPAGSAAAVYAARKGIRTGVAAERFGGQVLDTMSIENFISVPETEGPKMAAALEQHVRQYDVDIMNLQRAEQLIPAGADGLIEIKLANGASLKSKTVILSTGARWRQMNVPGEDQYKNKGVAYCPHCDGPLFKGKRVAVIGGGNSGVEAAIDLAGIVAHVTLVEFDDKLRADEVLQRKLRSLHNVRIITSAQTTEVLGDGQKVTGLVYKDRTGGDIQHIELEGVFVQIGLLPNTEFLRGTVALSPRGEIIVDDRGQTDVPGVFAAGDATTVPYKQIVIAMGEGSKAALSAFDHLIRTSAPATADSVAQAA.

214–229 (DVLVVGGGPAGSAAAV) provides a ligand contact to FAD. C344 and C347 are joined by a disulfide. 356 to 370 (RVAVIGGGNSGVEAA) is a binding site for NAD(+). 477–487 (TDVPGVFAAGD) lines the FAD pocket.

Belongs to the class-II pyridine nucleotide-disulfide oxidoreductase family. In terms of assembly, homodimer. FAD serves as cofactor.

Its function is as follows. Serves to protect the cell against DNA damage by alkyl hydroperoxides. It can use either NADH or NADPH as electron donor for direct reduction of redox dyes or of alkyl hydroperoxides when combined with the AhpC protein. The protein is Alkyl hydroperoxide reductase subunit F (ahpF) of Xanthomonas campestris pv. phaseoli.